A 291-amino-acid chain; its full sequence is Small ribosomal subunit biogenesis GTPase RsgA 1 (291 aa).

The CP-type G domain maps to 63–221 (ENALVRPPVA…VADTPGFSSI (159 aa)). GTP contacts are provided by residues 112-115 (SKMD) and 164-172 (GQSGVGKST). Residues C245, C250, H252, and C258 each contribute to the Zn(2+) site.

The protein belongs to the TRAFAC class YlqF/YawG GTPase family. RsgA subfamily. In terms of assembly, monomer. Associates with 30S ribosomal subunit, binds 16S rRNA. It depends on Zn(2+) as a cofactor.

The protein localises to the cytoplasm. In terms of biological role, one of several proteins that assist in the late maturation steps of the functional core of the 30S ribosomal subunit. Helps release RbfA from mature subunits. May play a role in the assembly of ribosomal proteins into the subunit. Circularly permuted GTPase that catalyzes slow GTP hydrolysis, GTPase activity is stimulated by the 30S ribosomal subunit. This is Small ribosomal subunit biogenesis GTPase RsgA 1 from Listeria monocytogenes serotype 4b (strain F2365).